Consider the following 96-residue polypeptide: Co-chaperonin GroES (96 aa).

The protein belongs to the GroES chaperonin family. Heptamer of 7 subunits arranged in a ring. Interacts with the chaperonin GroEL.

Its subcellular location is the cytoplasm. Together with the chaperonin GroEL, plays an essential role in assisting protein folding. The GroEL-GroES system forms a nano-cage that allows encapsulation of the non-native substrate proteins and provides a physical environment optimized to promote and accelerate protein folding. GroES binds to the apical surface of the GroEL ring, thereby capping the opening of the GroEL channel. The polypeptide is Co-chaperonin GroES (Actinobacillus pleuropneumoniae serotype 7 (strain AP76)).